The following is a 391-amino-acid chain: GTPase Obg (391 aa).

In terms of domain architecture, Obg spans 1–159 (MKFIDEALIR…RDLLLELMLL (159 aa)). The OBG-type G domain occupies 160–333 (ADVGMLGLPN…LTRDIMDFIE (174 aa)). Residues 166 to 173 (GLPNAGKS), 191 to 195 (FTTLV), 213 to 216 (DIPG), 283 to 286 (NKID), and 314 to 316 (SAA) contribute to the GTP site. Ser173 and Thr193 together coordinate Mg(2+).

Belongs to the TRAFAC class OBG-HflX-like GTPase superfamily. OBG GTPase family. Monomer. It depends on Mg(2+) as a cofactor.

The protein resides in the cytoplasm. Its function is as follows. An essential GTPase which binds GTP, GDP and possibly (p)ppGpp with moderate affinity, with high nucleotide exchange rates and a fairly low GTP hydrolysis rate. Plays a role in control of the cell cycle, stress response, ribosome biogenesis and in those bacteria that undergo differentiation, in morphogenesis control. This Actinobacillus pleuropneumoniae serotype 5b (strain L20) protein is GTPase Obg.